Consider the following 513-residue polypeptide: Keratin, type II cuticular Hb2 (513 aa).

The segment at 1 to 120 (MSYHSFQPGS…PTVQRVKRDE (120 aa)) is head. The region spanning 120–431 (EKEQIKCLNN…RLLEGEEHRL (312 aa)) is the IF rod domain. Residues 121–155 (KEQIKCLNNRFASFINKVRFLEQKNKLLETKWNFM) are coil 1A. The segment at 156 to 165 (QQQRCCQTNI) is linker 1. Positions 166 to 266 (EPIFEGYISA…YEEEICLLQS (101 aa)) are coil 1B. The segment at 267-283 (QISETSVIVKMDNSREL) is linker 12. Positions 284 to 427 (DVDGIIAEIK…ATYRRLLEGE (144 aa)) are coil 2. Residues 428–513 (EHRLCEGIGP…AGGSSPSHKH (86 aa)) are tail.

It belongs to the intermediate filament family. As to quaternary structure, heterotetramer of two type I and two type II keratins.

The polypeptide is Keratin, type II cuticular Hb2 (KRT82) (Homo sapiens (Human)).